Here is a 477-residue protein sequence, read N- to C-terminus: Bifunctional protein HldE (477 aa).

A ribokinase region spans residues 1-318 (MKVNLPAFER…ENAVRGRADT (318 aa)). Residue 195-198 (NLSE) coordinates ATP. The active site involves Asp-264. Residues 344 to 477 (MTNGVFDILH…IKKIQTESEK (134 aa)) form a cytidylyltransferase region.

This sequence in the N-terminal section; belongs to the carbohydrate kinase PfkB family. In the C-terminal section; belongs to the cytidylyltransferase family. Homodimer.

The catalysed reaction is D-glycero-beta-D-manno-heptose 7-phosphate + ATP = D-glycero-beta-D-manno-heptose 1,7-bisphosphate + ADP + H(+). It carries out the reaction D-glycero-beta-D-manno-heptose 1-phosphate + ATP + H(+) = ADP-D-glycero-beta-D-manno-heptose + diphosphate. The protein operates within nucleotide-sugar biosynthesis; ADP-L-glycero-beta-D-manno-heptose biosynthesis; ADP-L-glycero-beta-D-manno-heptose from D-glycero-beta-D-manno-heptose 7-phosphate: step 1/4. It functions in the pathway nucleotide-sugar biosynthesis; ADP-L-glycero-beta-D-manno-heptose biosynthesis; ADP-L-glycero-beta-D-manno-heptose from D-glycero-beta-D-manno-heptose 7-phosphate: step 3/4. Its function is as follows. Catalyzes the phosphorylation of D-glycero-D-manno-heptose 7-phosphate at the C-1 position to selectively form D-glycero-beta-D-manno-heptose-1,7-bisphosphate. In terms of biological role, catalyzes the ADP transfer from ATP to D-glycero-beta-D-manno-heptose 1-phosphate, yielding ADP-D-glycero-beta-D-manno-heptose. The polypeptide is Bifunctional protein HldE (Salmonella agona (strain SL483)).